The sequence spans 123 residues: MIQMQSMLDAADNSGARSVMCIKVLGGSHRRYAHIGDVIKVTVKEAIPRGKVKKGDVMKAVVVRTRKGVRRPDGSVIRFDRNACVLLNNTTEQPIGTRIFGPVTRELRGDKFMKIVSLAPEVL.

It belongs to the universal ribosomal protein uL14 family. In terms of assembly, part of the 50S ribosomal subunit. Forms a cluster with proteins L3 and L19. In the 70S ribosome, L14 and L19 interact and together make contacts with the 16S rRNA in bridges B5 and B8.

Binds to 23S rRNA. Forms part of two intersubunit bridges in the 70S ribosome. The chain is Large ribosomal subunit protein uL14 from Vibrio parahaemolyticus serotype O3:K6 (strain RIMD 2210633).